We begin with the raw amino-acid sequence, 684 residues long: Threonine--tRNA ligase (684 aa).

The TGS domain occupies 1–66; that stretch reads MTVPATDSWP…DTDAEVVPVA (66 aa). The catalytic stretch occupies residues 261–567; that stretch reads DHRKLGSELD…LTEHYAGAFP (307 aa). Cysteine 366, histidine 417, and histidine 544 together coordinate Zn(2+).

This sequence belongs to the class-II aminoacyl-tRNA synthetase family. Homodimer. Requires Zn(2+) as cofactor.

The protein localises to the cytoplasm. It catalyses the reaction tRNA(Thr) + L-threonine + ATP = L-threonyl-tRNA(Thr) + AMP + diphosphate + H(+). Catalyzes the attachment of threonine to tRNA(Thr) in a two-step reaction: L-threonine is first activated by ATP to form Thr-AMP and then transferred to the acceptor end of tRNA(Thr). Also edits incorrectly charged L-seryl-tRNA(Thr). This chain is Threonine--tRNA ligase, found in Mycobacterium avium (strain 104).